Reading from the N-terminus, the 1375-residue chain is MDRTKRRKIEKEASLLNERNNLLESDFANCYRAFQHQLKLDQQIWRGPEDELNRLKSTIYPVVFWVDGSEKLHAYSFTQRKISLAKNLIPLFSVDLNKDTYSALKAPLKIWSKLWEDNRRLKKIIKYTSYVTVKGSELILSFGISILDSFLAPQDAILSSGSSSSYTALLDYTFLPSEDEEYSCLDINTALFYDCARKLAKSLRFANVSRDPRLSSELLPFQMRVLEWMKRREEEKFLTSNDLPPLWYHCKSLFDDRMVYVNHVYGYMTFSKEKTYLLASGDIRGGILADEMGMGKTLEVLGLVLHHQLPISLTDTCTFDQVVGKNVKYSKATLIITPSTILDQWLSEIDLHVPSLKVFHYQGIRKSNGLKSAKIFLDCDIVVTSYSDLRFELLYTESHSRTLRHEKRHVSPKSPLIDVCWWRICVDEAQMVETSQSNVAQMIYRIPRVNCWTVSGTPVRSEVDDLFGLLFLLRYSPMYLYKKQAWMQIIEKKRVREFCDLFGSLVCRHSKQDVEEELKLPPQHRICMTTRLSVVEETNYQDLLSEAAKSLHFFKDRNLDLCDEESMRRWLVRLRQACCHPQVGFGNKSAFGGGPMKSINDVLVFMLEQTNSTFSSLNRKLYSDKIIVGQIYDHIKDYNKALAIWSEVRIPVELAVKELENVIYNSKYEDHGKNLPINYFGLDHFIHLRVWYVLLHKIYFFIASAYFSLKNEKFENEFYLLAQDLRRKIMSDVIIKTSKHLEEFSEKFIPKKLVKIPRLQKSYAKGLITGHGIIEDYNRLYKELNDQKEVLIKFRDRLIHLMKLPLLDQESDPTGDEYEESLNAQSEISYCIDVYRQMLSDRVAAVSGTINTFVSHETELEKYKLIESIKKSEKSLDKQAEERDKKYLLYFEEREEARPKADQYGSLINIVSRLLDASNRSTSSFETSKNMEEYERIDAMAKEQSRICQKLEKELSIIQLTYNSRIEYYKQLQEISDSLMPPPVSNISLNNYVKDDEKKQKFLNSVIIKASVILEKEISEKQDEASQTTNVAELVNQKISEMNIPGHIHLLRELEEEKSNTQRKIAHFESRRRYLTNLYEHIVLKAESHQICIICRDIIKQGFITTCGHLYCSFCLEAWLKHSSSCPMCKTKLNKNNAYYIGESRDIYSRQEFVTGFNKRDERLEILDDEAYRQISNMELKESFGSKIDTISKHLLYLKHNELYPKVVVFSQWLDVLDVLHKSFEANGIVFIRFDGKSKNTCLKRFKEERSLQVLTLHARSQSSGLTLTNATHVFMCEPLLNSGIEMQAISRVHRIGQTRPTFVYYYIVEDTVEGHILNLSLTKHEQLDKLGLDVPLVGNINRTTEASSGGEQVDAAEIKDCLKMALKRLTTEDS.

The region spanning 277–476 (LLASGDIRGG…FGLLFLLRYS (200 aa)) is the Helicase ATP-binding domain. 290-297 (DEMGMGKT) is an ATP binding site. An RING-type zinc finger spans residues 1092 to 1130 (CIICRDIIKQGFITTCGHLYCSFCLEAWLKHSSSCPMCK). The region spanning 1190–1336 (TISKHLLYLK…QLDKLGLDVP (147 aa)) is the Helicase C-terminal domain.

This sequence belongs to the SNF2/RAD54 helicase family.

Its subcellular location is the nucleus. This is an uncharacterized protein from Schizosaccharomyces pombe (strain 972 / ATCC 24843) (Fission yeast).